A 225-amino-acid polypeptide reads, in one-letter code: Cytochrome c oxidase subunit 2 (225 aa).

The Mitochondrial intermembrane segment spans residues 1–26 (MMTWSQMSFSDMNSPIMEQMVFFHDH). A helical membrane pass occupies residues 27–48 (SMMIILMITILTIYMITNIMMN). Topologically, residues 49 to 62 (NLLSRSMMEGQEIE) are mitochondrial matrix. The helical transmembrane segment at 63 to 82 (IIWTIIPAITLIFIAIPSLH) threads the bilayer. Residues 83 to 225 (LLYLTDETFN…KNFINFINSS (143 aa)) lie on the Mitochondrial intermembrane side of the membrane. Cu cation contacts are provided by His160, Cys195, Glu197, Cys199, His203, and Met206. Residue Glu197 coordinates Mg(2+).

Belongs to the cytochrome c oxidase subunit 2 family. Component of the cytochrome c oxidase (complex IV, CIV), a multisubunit enzyme composed of a catalytic core of 3 subunits and several supernumerary subunits. The complex exists as a monomer or a dimer and forms supercomplexes (SCs) in the inner mitochondrial membrane with ubiquinol-cytochrome c oxidoreductase (cytochrome b-c1 complex, complex III, CIII). Cu cation is required as a cofactor.

It is found in the mitochondrion inner membrane. The enzyme catalyses 4 Fe(II)-[cytochrome c] + O2 + 8 H(+)(in) = 4 Fe(III)-[cytochrome c] + 2 H2O + 4 H(+)(out). Functionally, component of the cytochrome c oxidase, the last enzyme in the mitochondrial electron transport chain which drives oxidative phosphorylation. The respiratory chain contains 3 multisubunit complexes succinate dehydrogenase (complex II, CII), ubiquinol-cytochrome c oxidoreductase (cytochrome b-c1 complex, complex III, CIII) and cytochrome c oxidase (complex IV, CIV), that cooperate to transfer electrons derived from NADH and succinate to molecular oxygen, creating an electrochemical gradient over the inner membrane that drives transmembrane transport and the ATP synthase. Cytochrome c oxidase is the component of the respiratory chain that catalyzes the reduction of oxygen to water. Electrons originating from reduced cytochrome c in the intermembrane space (IMS) are transferred via the dinuclear copper A center (CU(A)) of subunit 2 and heme A of subunit 1 to the active site in subunit 1, a binuclear center (BNC) formed by heme A3 and copper B (CU(B)). The BNC reduces molecular oxygen to 2 water molecules using 4 electrons from cytochrome c in the IMS and 4 protons from the mitochondrial matrix. This is Cytochrome c oxidase subunit 2 (COII) from Rhipicephalus sanguineus (Brown dog tick).